A 361-amino-acid polypeptide reads, in one-letter code: Queuine tRNA-ribosyltransferase (361 aa).

The Proton acceptor role is filled by Asp92. Substrate is bound by residues 92–96 (DSGGF), Asp146, Gln189, and Gly216. The segment at 247-253 (GVGKPAD) is RNA binding. Asp266 acts as the Nucleophile in catalysis. The tract at residues 271 to 275 (TRSGR) is RNA binding; important for wobble base 34 recognition. Zn(2+)-binding residues include Cys304, Cys306, Cys309, and His335.

The protein belongs to the queuine tRNA-ribosyltransferase family. Homodimer. Within each dimer, one monomer is responsible for RNA recognition and catalysis, while the other monomer binds to the replacement base PreQ1. Zn(2+) is required as a cofactor.

It carries out the reaction 7-aminomethyl-7-carbaguanine + guanosine(34) in tRNA = 7-aminomethyl-7-carbaguanosine(34) in tRNA + guanine. It functions in the pathway tRNA modification; tRNA-queuosine biosynthesis. Its function is as follows. Catalyzes the base-exchange of a guanine (G) residue with the queuine precursor 7-aminomethyl-7-deazaguanine (PreQ1) at position 34 (anticodon wobble position) in tRNAs with GU(N) anticodons (tRNA-Asp, -Asn, -His and -Tyr). Catalysis occurs through a double-displacement mechanism. The nucleophile active site attacks the C1' of nucleotide 34 to detach the guanine base from the RNA, forming a covalent enzyme-RNA intermediate. The proton acceptor active site deprotonates the incoming PreQ1, allowing a nucleophilic attack on the C1' of the ribose to form the product. After dissociation, two additional enzymatic reactions on the tRNA convert PreQ1 to queuine (Q), resulting in the hypermodified nucleoside queuosine (7-(((4,5-cis-dihydroxy-2-cyclopenten-1-yl)amino)methyl)-7-deazaguanosine). The polypeptide is Queuine tRNA-ribosyltransferase (Rickettsia bellii (strain OSU 85-389)).